Reading from the N-terminus, the 236-residue chain is MGQKVHPNGIRLGITKPWNSTWFANTKDFADNLYSDFQVRQFLTKELKNASLSKITIERPAKSIRVTIHTARPGVVIGKKGEDVEKLRKAVAVITGVPAQINISEVRKPELDGKLVADSITSQLERRVMFRRAMKRAVQNAMRLGAKGIKVEVSGRLGGAEIARTEWYREGRVPLHTLRADIDYATSEAHTTYGVIGVKVWIFKGEVLGGLAAVNAAAAQEQAPAKPKRDNKRRGK.

Residues 39–107 (VRQFLTKELK…PAQINISEVR (69 aa)) form the KH type-2 domain.

This sequence belongs to the universal ribosomal protein uS3 family. Part of the 30S ribosomal subunit. Forms a tight complex with proteins S10 and S14.

Functionally, binds the lower part of the 30S subunit head. Binds mRNA in the 70S ribosome, positioning it for translation. The polypeptide is Small ribosomal subunit protein uS3 (Aeromonas salmonicida (strain A449)).